The chain runs to 104 residues: MRGNAPTLKDIILYDLPTCDPTTCDTPPVDLYCYEQFDTSDEDDEDDDQPIKQDIQRYRIVCGCTQCGRSVKLVVSSTGADIQQLHQMLLDTLGIVCPLCACVE.

The E7 terminal domain stretch occupies residues 1 to 49 (MRGNAPTLKDIILYDLPTCDPTTCDTPPVDLYCYEQFDTSDEDDEDDDQ). The LXCXE motif; interaction with host RB1 and TMEM173/STING signature appears at 31–35 (LYCYE). Residues 64–100 (CTQCGRSVKLVVSSTGADIQQLHQMLLDTLGIVCPLC) fold into a zinc finger. The Nuclear export signal signature appears at 82 to 90 (IQQLHQMLL).

It belongs to the papillomaviridae E7 protein family. As to quaternary structure, homodimer. Homooligomer. Interacts with host RB1; this interaction induces dissociation of RB1-E2F1 complex thereby disrupting RB1 activity. Interacts with host EP300; this interaction represses EP300 transcriptional activity. Interacts with protein E2; this interaction inhibits E7 oncogenic activity. Interacts with host TMEM173/STING; this interaction impairs the ability of TMEM173/STING to sense cytosolic DNA and promote the production of type I interferon (IFN-alpha and IFN-beta). Highly phosphorylated.

The protein resides in the host cytoplasm. The protein localises to the host nucleus. In terms of biological role, plays a role in viral genome replication by driving entry of quiescent cells into the cell cycle. Stimulation of progression from G1 to S phase allows the virus to efficiently use the cellular DNA replicating machinery to achieve viral genome replication. E7 protein has both transforming and trans-activating activities. Induces the disassembly of the E2F1 transcription factor from RB1, with subsequent transcriptional activation of E2F1-regulated S-phase genes. Interferes with host histone deacetylation mediated by HDAC1 and HDAC2, leading to transcription activation. Also plays a role in the inhibition of both antiviral and antiproliferative functions of host interferon alpha. Interaction with host TMEM173/STING impairs the ability of TMEM173/STING to sense cytosolic DNA and promote the production of type I interferon (IFN-alpha and IFN-beta). This is Protein E7 from Homo sapiens (Human).